A 512-amino-acid polypeptide reads, in one-letter code: 2-isopropylmalate synthase (512 aa).

A Pyruvate carboxyltransferase domain is found at 4-266 (IQFFDTTLRD…ETNIVLNQFK (263 aa)). Mn(2+) is bound by residues Asp13, His201, His203, and Asn237. Positions 390–512 (ELKHLQVQYV…SKQADFEEVK (123 aa)) are regulatory domain.

Belongs to the alpha-IPM synthase/homocitrate synthase family. LeuA type 1 subfamily. In terms of assembly, homodimer. It depends on Mn(2+) as a cofactor.

Its subcellular location is the cytoplasm. It carries out the reaction 3-methyl-2-oxobutanoate + acetyl-CoA + H2O = (2S)-2-isopropylmalate + CoA + H(+). Its pathway is amino-acid biosynthesis; L-leucine biosynthesis; L-leucine from 3-methyl-2-oxobutanoate: step 1/4. In terms of biological role, catalyzes the condensation of the acetyl group of acetyl-CoA with 3-methyl-2-oxobutanoate (2-ketoisovalerate) to form 3-carboxy-3-hydroxy-4-methylpentanoate (2-isopropylmalate). This is 2-isopropylmalate synthase from Listeria monocytogenes serotype 4b (strain CLIP80459).